Reading from the N-terminus, the 200-residue chain is Ribosomal RNA large subunit methyltransferase E (200 aa).

Residues G49, W51, D69, D87, and D111 each contribute to the S-adenosyl-L-methionine site. Catalysis depends on K151, which acts as the Proton acceptor.

Belongs to the class I-like SAM-binding methyltransferase superfamily. RNA methyltransferase RlmE family.

Its subcellular location is the cytoplasm. It catalyses the reaction uridine(2552) in 23S rRNA + S-adenosyl-L-methionine = 2'-O-methyluridine(2552) in 23S rRNA + S-adenosyl-L-homocysteine + H(+). In terms of biological role, specifically methylates the uridine in position 2552 of 23S rRNA at the 2'-O position of the ribose in the fully assembled 50S ribosomal subunit. This is Ribosomal RNA large subunit methyltransferase E from Lawsonia intracellularis (strain PHE/MN1-00).